A 138-amino-acid chain; its full sequence is Large ribosomal subunit protein uL16 (138 aa).

The segment covering M1–Q17 has biased composition (basic residues). The segment at M1 to S22 is disordered.

The protein belongs to the universal ribosomal protein uL16 family. As to quaternary structure, part of the 50S ribosomal subunit.

Its function is as follows. Binds 23S rRNA and is also seen to make contacts with the A and possibly P site tRNAs. This Mycobacterium leprae (strain Br4923) protein is Large ribosomal subunit protein uL16.